The sequence spans 205 residues: Urease accessory protein UreG (205 aa).

14-21 (GPVGSGKT) contributes to the GTP binding site.

The protein belongs to the SIMIBI class G3E GTPase family. UreG subfamily. Homodimer. UreD, UreF and UreG form a complex that acts as a GTP-hydrolysis-dependent molecular chaperone, activating the urease apoprotein by helping to assemble the nickel containing metallocenter of UreC. The UreE protein probably delivers the nickel.

It localises to the cytoplasm. Facilitates the functional incorporation of the urease nickel metallocenter. This process requires GTP hydrolysis, probably effectuated by UreG. This is Urease accessory protein UreG from Proteus mirabilis (strain HI4320).